A 422-amino-acid polypeptide reads, in one-letter code: UDP-N-acetylglucosamine 1-carboxyvinyltransferase (422 aa).

A phosphoenolpyruvate-binding site is contributed by 22-23; the sequence is KN. Residue Arg-93 participates in UDP-N-acetyl-alpha-D-glucosamine binding. The active-site Proton donor is the Cys-117. At Cys-117 the chain carries 2-(S-cysteinyl)pyruvic acid O-phosphothioketal. UDP-N-acetyl-alpha-D-glucosamine-binding positions include 122 to 126, Asp-308, and Leu-330; that span reads RPVDL.

Belongs to the EPSP synthase family. MurA subfamily.

It is found in the cytoplasm. It catalyses the reaction phosphoenolpyruvate + UDP-N-acetyl-alpha-D-glucosamine = UDP-N-acetyl-3-O-(1-carboxyvinyl)-alpha-D-glucosamine + phosphate. Its pathway is cell wall biogenesis; peptidoglycan biosynthesis. In terms of biological role, cell wall formation. Adds enolpyruvyl to UDP-N-acetylglucosamine. In Helicobacter pylori (strain P12), this protein is UDP-N-acetylglucosamine 1-carboxyvinyltransferase.